Consider the following 194-residue polypeptide: Protein ORF31 (194 aa).

The N-terminal stretch at 1-25 is a signal peptide; sequence MKSVASPLCQFHGVFCLYQCRQCLA.

This sequence belongs to the herpesviridae UL92 family. As to quaternary structure, interacts with ORF34.

Its subcellular location is the host nucleus. The protein localises to the host cytoplasm. Plays an important role in the expression of late genes. May play a role in viral replication. This is Protein ORF31 (ORF31) from Homo sapiens (Human).